We begin with the raw amino-acid sequence, 510 residues long: Nectin-4 (510 aa).

Positions 1-31 (MPLSLGAEMWGPEAWLLLLLLLASFTGRCPA) are cleaved as a signal peptide. The 113-residue stretch at 32-144 (GELETSDVVT…GSFQARLRLR (113 aa)) folds into the Ig-like V-type domain. Over 32–349 (GELETSDVVT…GKQVDLVSAS (318 aa)) the chain is Extracellular. 3 cysteine pairs are disulfide-bonded: cysteine 52–cysteine 127, cysteine 171–cysteine 223, and cysteine 270–cysteine 315. 2 Ig-like C2-type domains span residues 148 to 237 (PPLP…QRIT) and 248 to 331 (ASVR…VTVD). N-linked (GlcNAc...) asparagine glycosylation occurs at asparagine 281. Residues 350–370 (VVVVGVIAALLFCLLVVVVVL) traverse the membrane as a helical segment. Residues 371–510 (MSRYHRRKAQ…IYINGRGHLV (140 aa)) are Cytoplasmic-facing. Residues 399–412 (RRLHSHHTDPRSQP) show a composition bias toward basic and acidic residues. Disordered stretches follow at residues 399–447 (RRLH…SYST) and 457–476 (QTEL…DQDE).

It belongs to the nectin family. In terms of assembly, self-associates. Interacts via its Ig-like V-type domain with NECTIN1 Ig-like V-type domain. Interacts via its C-terminus with AFDN. (Microbial infection) Interacts (via N-terminus) with measles virus hemagglutinin protein. The soluble form is produced by proteolytic cleavage at the cell surface (shedding), probably by ADAM17/TACE. In terms of tissue distribution, predominantly expressed in placenta. Not detected in normal breast epithelium but expressed in breast carcinoma.

Its subcellular location is the cell membrane. The protein resides in the cell junction. It is found in the adherens junction. It localises to the secreted. Seems to be involved in cell adhesion through trans-homophilic and -heterophilic interactions, the latter including specifically interactions with NECTIN1. Does not act as receptor for alpha-herpesvirus entry into cells. Its function is as follows. (Microbial infection) Acts as a receptor for measles virus. This chain is Nectin-4, found in Homo sapiens (Human).